Consider the following 243-residue polypeptide: NAD(P)H-quinone oxidoreductase subunit K (243 aa).

[4Fe-4S] cluster-binding residues include C59, C60, C124, and C155.

It belongs to the complex I 20 kDa subunit family. In terms of assembly, NDH-1 can be composed of about 15 different subunits; different subcomplexes with different compositions have been identified which probably have different functions. It depends on [4Fe-4S] cluster as a cofactor.

It localises to the cellular thylakoid membrane. The catalysed reaction is a plastoquinone + NADH + (n+1) H(+)(in) = a plastoquinol + NAD(+) + n H(+)(out). It carries out the reaction a plastoquinone + NADPH + (n+1) H(+)(in) = a plastoquinol + NADP(+) + n H(+)(out). In terms of biological role, NDH-1 shuttles electrons from an unknown electron donor, via FMN and iron-sulfur (Fe-S) centers, to quinones in the respiratory and/or the photosynthetic chain. The immediate electron acceptor for the enzyme in this species is believed to be plastoquinone. Couples the redox reaction to proton translocation, and thus conserves the redox energy in a proton gradient. Cyanobacterial NDH-1 also plays a role in inorganic carbon-concentration. The chain is NAD(P)H-quinone oxidoreductase subunit K from Picosynechococcus sp. (strain ATCC 27264 / PCC 7002 / PR-6) (Agmenellum quadruplicatum).